Here is a 211-residue protein sequence, read N- to C-terminus: MKRRDTIVRYTAPERINHWITAFCFILAAVSGLGFLFPSFNWLMQIMGTPQLARILHPFVGVVMFASFIIMFFRYWHHNLINRDDIFWAKNIRKIVVNEEVGDTGRYNFGQKCVFWAAIIFLVLLLVSGVIIWRPYFAPAFSIPVIRFALMLHSFAAVALIVVIMVHIYAALWVKGTITAMVEGWVTSAWAKKHHPRWYREVRKTTEKKAE.

The Cytoplasmic segment spans residues 1 to 17; it reads MKRRDTIVRYTAPERIN. His18 is a binding site for heme b. The helical transmembrane segment at 18–32 threads the bilayer; sequence HWITAFCFILAAVSG. At 33 to 53 the chain is on the periplasmic side; that stretch reads LGFLFPSFNWLMQIMGTPQLA. Residues 54 to 72 form a helical membrane-spanning segment; that stretch reads RILHPFVGVVMFASFIIMF. Residue His57 coordinates heme b. The Cytoplasmic segment spans residues 73–112; it reads FRYWHHNLINRDDIFWAKNIRKIVVNEEVGDTGRYNFGQK. A helical membrane pass occupies residues 113–130; sequence CVFWAAIIFLVLLLVSGV. Residues 131-151 are Periplasmic-facing; that stretch reads IIWRPYFAPAFSIPVIRFALM. The chain crosses the membrane as a helical span at residues 152-170; that stretch reads LHSFAAVALIVVIMVHIYA. Heme b contacts are provided by His153 and His167. Topologically, residues 171 to 211 are cytoplasmic; the sequence is ALWVKGTITAMVEGWVTSAWAKKHHPRWYREVRKTTEKKAE.

It belongs to the formate dehydrogenase gamma subunit family. In terms of assembly, formate dehydrogenase is a membrane-bound complex, formed by subunits alpha, beta and gamma. It depends on heme as a cofactor.

Its subcellular location is the cell inner membrane. Its function is as follows. Allows to use formate as major electron donor during aerobic respiration. Subunit gamma is probably the cytochrome b556(FDO) component of the formate dehydrogenase. The chain is Formate dehydrogenase, cytochrome b556(fdo) subunit (fdoI) from Escherichia coli O157:H7.